The following is a 283-amino-acid chain: MARHVWQAGRFEIGLDKPKIMGIVNLTPDSFSDGGVYSQNAQTALAHAEQLLKEGADILDIGGESTRSGADYVSPEEEWARVEPVLAEVAGWGVPISLDTRRTVIMEKALALGGIDIINDVAALNDEGAVELLARQADTGICLMHMQGLPKNMQINPKYQDVVGEVARYLKARAAECIAAGIAPQRITLDPGFCFGKTLQHNITLMRHLPELMAETGYPLLIGVSRKSMIGELTGETDAAARGHGSVAAALAAVARGAKIVRVHDVKATADALKAWEALGINL.

The Pterin-binding domain maps to 18–274 (PKIMGIVNLT…DVKATADALK (257 aa)). Position 25 (N25) interacts with Mg(2+). Residues T66, D99, N119, D190, K227, and 262-264 (RVH) contribute to the (7,8-dihydropterin-6-yl)methyl diphosphate site.

It belongs to the DHPS family. As to quaternary structure, homodimer. The cofactor is Mg(2+).

It catalyses the reaction (7,8-dihydropterin-6-yl)methyl diphosphate + 4-aminobenzoate = 7,8-dihydropteroate + diphosphate. It functions in the pathway cofactor biosynthesis; tetrahydrofolate biosynthesis; 7,8-dihydrofolate from 2-amino-4-hydroxy-6-hydroxymethyl-7,8-dihydropteridine diphosphate and 4-aminobenzoate: step 1/2. Catalyzes the condensation of para-aminobenzoate (pABA) with 6-hydroxymethyl-7,8-dihydropterin diphosphate (DHPt-PP) to form 7,8-dihydropteroate (H2Pte), the immediate precursor of folate derivatives. The sequence is that of Dihydropteroate synthase (folP) from Neisseria meningitidis serogroup C.